The sequence spans 539 residues: Phosphoenolpyruvate carboxykinase (ATP) (539 aa).

3 residues coordinate substrate: R64, Y206, and K212. Residues K212, H231, and 247–255 each bind ATP; that span reads GLSGTGKTT. Positions 212 and 231 each coordinate Mn(2+). Residue D268 coordinates Mn(2+). Residues E296, R332, 448–449, and T454 contribute to the ATP site; that span reads RI. R332 is a substrate binding site.

Belongs to the phosphoenolpyruvate carboxykinase (ATP) family. Monomer. Mn(2+) serves as cofactor.

It is found in the cytoplasm. The enzyme catalyses oxaloacetate + ATP = phosphoenolpyruvate + ADP + CO2. Its pathway is carbohydrate biosynthesis; gluconeogenesis. In terms of biological role, involved in the gluconeogenesis. Catalyzes the conversion of oxaloacetate (OAA) to phosphoenolpyruvate (PEP) through direct phosphoryl transfer between the nucleoside triphosphate and OAA. This chain is Phosphoenolpyruvate carboxykinase (ATP), found in Hamiltonella defensa subsp. Acyrthosiphon pisum (strain 5AT).